The chain runs to 188 residues: Phosphatidylcholine-sterol acyltransferase (188 aa).

Asn20 carries an N-linked (GlcNAc...) asparagine glycan. The active-site Charge relay system is His169.

This sequence belongs to the AB hydrolase superfamily. Lipase family. As to expression, detected in blood plasma (at protein level).

Its subcellular location is the secreted. It carries out the reaction a sterol + a 1,2-diacyl-sn-glycero-3-phosphocholine = a sterol ester + a 1-acyl-sn-glycero-3-phosphocholine. It catalyses the reaction a 1-O-alkyl-2-acetyl-sn-glycero-3-phosphocholine + H2O = a 1-O-alkyl-sn-glycero-3-phosphocholine + acetate + H(+). The catalysed reaction is a 1-hexadecanoyl-2-acyl-sn-glycero-3-phosphocholine + (24S)-hydroxycholesterol = (24S)-24-hydroxycholesterol ester + 1-hexadecanoyl-sn-glycero-3-phosphocholine. The enzyme catalyses (24S)-hydroxycholesterol + 1-hexadecanoyl-2-(9Z,12Z-octadecadienoyl)-sn-glycero-3-phosphocholine = (24S)-hydroxycholesterol 3-linoleoate + 1-hexadecanoyl-sn-glycero-3-phosphocholine. It carries out the reaction 1-hexadecanoyl-2-(5Z,8Z,11Z,14Z-eicosatetraenoyl)-sn-glycero-3-phosphocholine + cholesterol = cholesteryl (5Z,8Z,11Z,14Z)-eicosatetraenoate + 1-hexadecanoyl-sn-glycero-3-phosphocholine. It catalyses the reaction 1-hexadecanoyl-2-(9Z-octadecenoyl)-sn-glycero-3-phosphocholine + cholesterol = cholesteryl (9Z-octadecenoate) + 1-hexadecanoyl-sn-glycero-3-phosphocholine. The catalysed reaction is 1-hexadecanoyl-2-(8Z,11Z,14Z-eicosatrienoyl)-sn-glycero-3-phosphocholine + cholesterol = cholesteryl (8Z,11Z,14Z)-eicosatrienoate + 1-hexadecanoyl-sn-glycero-3-phosphocholine. The enzyme catalyses 1-hexadecanoyl-2-(5Z,8Z,11Z-eicosatrienoyl)-sn-glycero-3-phosphocholine + cholesterol = cholesteryl (5Z,8Z,11Z)-eicosatrienoate + 1-hexadecanoyl-sn-glycero-3-phosphocholine. It carries out the reaction 1-hexadecanoyl-2-(5Z,8Z,11Z,14Z,17Z-eicosapentaenoyl)-sn-glycero-3-phosphocholine + cholesterol = (5Z,8Z,11Z,14Z,17Z-eicosapentaenoyl)-cholesterol + 1-hexadecanoyl-sn-glycero-3-phosphocholine. It catalyses the reaction 1-hexadecanoyl-2-(9Z,12Z-octadecadienoyl)-sn-glycero-3-phosphocholine + cholesterol = cholesteryl (9Z,12Z)-octadecadienoate + 1-hexadecanoyl-sn-glycero-3-phosphocholine. The catalysed reaction is 1-hexadecanoyl-2-(6Z,9Z,12Z-octadecatrienoyl)-sn-glycero-3-phosphocholine + cholesterol = (6Z,9Z,12Z-octadecatrienoyl)-cholesterol + 1-hexadecanoyl-sn-glycero-3-phosphocholine. The enzyme catalyses 1-hexadecanoyl-2-(11Z,14Z,17Z-eicosatrienoyl)-sn-glycero-3-phosphocholine + cholesterol = (11Z,14Z,17Z-eicosatrienoyl)-cholesterol + 1-hexadecanoyl-sn-glycero-3-phosphocholine. It carries out the reaction 1-hexadecanoyl-2-(9Z,12Z,15Z-octadecatrienoyl)-sn-glycero-3-phosphocholine + cholesterol = (9Z,12Z,15Z-octadecatrienoyl)-cholesterol + 1-hexadecanoyl-sn-glycero-3-phosphocholine. It catalyses the reaction 1-hexadecanoyl-2-(9Z,12Z-octadecadienoyl)-sn-glycero-3-phosphocholine + H2O = (9Z,12Z)-octadecadienoate + 1-hexadecanoyl-sn-glycero-3-phosphocholine + H(+). The catalysed reaction is 1-hexadecanoyl-2-(5Z,8Z,11Z,14Z-eicosatetraenoyl)-sn-glycero-3-phosphocholine + H2O = 1-hexadecanoyl-sn-glycero-3-phosphocholine + (5Z,8Z,11Z,14Z)-eicosatetraenoate + H(+). The enzyme catalyses a 1-O-alkyl-2-acetyl-sn-glycero-3-phosphocholine + 1-hexadecanoyl-sn-glycero-3-phosphocholine = 1-hexadecanoyl-2-acetyl-sn-glycero-3-phosphocholine + a 1-O-alkyl-sn-glycero-3-phosphocholine. Its function is as follows. Central enzyme in the extracellular metabolism of plasma lipoproteins. Synthesized mainly in the liver and secreted into plasma where it converts cholesterol and phosphatidylcholines (lecithins) to cholesteryl esters and lysophosphatidylcholines on the surface of high and low density lipoproteins (HDLs and LDLs). The cholesterol ester is then transported back to the liver. Also produced in the brain by primary astrocytes, and esterifies free cholesterol on nascent APOE-containing lipoproteins secreted from glia and influences cerebral spinal fluid (CSF) APOE- and APOA1 levels. Together with APOE and the cholesterol transporter ABCA1, plays a key role in the maturation of glial-derived, nascent lipoproteins. Required for remodeling high-density lipoprotein particles into their spherical forms. Has a preference for plasma 16:0-18:2 or 18:O-18:2 phosphatidylcholines. Catalyzes the hydrolysis of 1-O-alkyl-2-acetyl-sn-glycero-3-phosphocholine (platelet-activating factor or PAF) to 1-O-alkyl-sn-glycero-3-phosphocholine (lyso-PAF). Also catalyzes the transfer of the acetate group from PAF to 1-hexadecanoyl-sn-glycero-3-phosphocholine forming lyso-PAF. Catalyzes the esterification of (24S)-hydroxycholesterol (24(S)OH-C), also known as cerebrosterol to produce 24(S)OH-C monoesters. The protein is Phosphatidylcholine-sterol acyltransferase (LCAT) of Sus scrofa (Pig).